The chain runs to 439 residues: Probable anion transporter 7 (439 aa).

The signal sequence occupies residues 1–28 (MTALTRMKFPKRYVIVLLTFICTNVCYI). 11 helical membrane-spanning segments follow: residues 53–73 (MILS…GWAA), 81–101 (VLLL…LDPK), 104–124 (VILV…FPAI), 143–163 (LTTS…PSLV), 167–187 (GAQS…VIWL), 232–252 (IIFS…HYAL), 280–300 (LPYF…DHLI), 312–332 (KLLN…LPLF), 338–358 (TVLC…GFAV), 367–387 (FAGI…IVGV), and 412–432 (TVFF…LIFS).

The protein belongs to the major facilitator superfamily. Sodium/anion cotransporter (TC 2.A.1.14) family.

It is found in the cell membrane. Its function is as follows. Probable anion transporter. The sequence is that of Probable anion transporter 7 (PHT4;7) from Oryza sativa subsp. japonica (Rice).